The following is a 1018-amino-acid chain: Importin-9 (1018 aa).

The 80-residue stretch at 35–114 (TEKRIKQLEY…RNILPNGLYD (80 aa)) folds into the Importin N-terminal domain. A disordered region spans residues 921-950 (GKSDEPLTDSEEDGDDEDAPGNPDKPRYIS). A compositionally biased stretch (acidic residues) spans 926–939 (PLTDSEEDGDDEDA).

This sequence belongs to the importin beta family.

The protein localises to the cytoplasm. It localises to the nucleus. In terms of biological role, nuclear transport receptor that mediates nuclear import of proteins. Serves as receptor for nuclear localization signals (NLS) in cargo substrates. Is thought to mediate docking of the importin/substrate complex to the nuclear pore complex (NPC) through binding to nucleoporin and the complex is subsequently translocated through the pore by an energy requiring, Ran-dependent mechanism. Mediates the import of pre-assembled proteasomes into the nucleus during the late stages of sperm development. The sequence is that of Importin-9 from Drosophila melanogaster (Fruit fly).